Reading from the N-terminus, the 73-residue chain is MASSVLARPGPSTVLPAMTRPPPPMAHRAAATPSFARSSQPQLTDDAVLALLANAEHTEAGEETTARGWCVVA.

The tract at residues 1–41 is disordered; it reads MASSVLARPGPSTVLPAMTRPPPPMAHRAAATPSFARSSQP. The residue at position 70 (Cys70) is a Cysteine methyl ester. Cys70 carries S-farnesyl cysteine lipidation. Residues 71-73 constitute a propeptide, removed in mature form; the sequence is VVA.

The protein localises to the cell membrane. Activates B-regulated development. This chain is Mating-type pheromone BBP1(3) (BBP1(3)), found in Schizophyllum commune (Split gill fungus).